The sequence spans 811 residues: Ent-13-epi-manoyl oxide synthase KSL2, chloroplastic (811 aa).

A chloroplast-targeting transit peptide spans 1–49; sequence MALPLSTCLLFHPKESRSRRFCFSPASAASLKSGLHSATSAKIASMPTC. Positions 550, 554, 694, and 702 each coordinate Mg(2+). Positions 550 to 554 match the DDXXD motif motif; the sequence is DDFFD.

Belongs to the terpene synthase family. The cofactor is Mg(2+).

It is found in the plastid. The protein localises to the chloroplast. The enzyme catalyses ent-8alpha-hydroxylabd-13-en-15-yl diphosphate = ent-13-epi-manoyl oxide + diphosphate. It participates in secondary metabolite biosynthesis; terpenoid biosynthesis. Involved in diterpenoid biosynthesis. Catalyzes the conversion of ent-8alpha-hydroxylabd-13-en-15-yl diphosphate to ent-13-epi-manoyl oxide. The chain is Ent-13-epi-manoyl oxide synthase KSL2, chloroplastic from Salvia miltiorrhiza (Chinese sage).